The chain runs to 259 residues: Ubiquinone/menaquinone biosynthesis C-methyltransferase UbiE (259 aa).

S-adenosyl-L-methionine-binding positions include threonine 82, aspartate 103, asparagine 131–alanine 132, and serine 148.

The protein belongs to the class I-like SAM-binding methyltransferase superfamily. MenG/UbiE family.

It catalyses the reaction a 2-demethylmenaquinol + S-adenosyl-L-methionine = a menaquinol + S-adenosyl-L-homocysteine + H(+). The enzyme catalyses a 2-methoxy-6-(all-trans-polyprenyl)benzene-1,4-diol + S-adenosyl-L-methionine = a 5-methoxy-2-methyl-3-(all-trans-polyprenyl)benzene-1,4-diol + S-adenosyl-L-homocysteine + H(+). It functions in the pathway quinol/quinone metabolism; menaquinone biosynthesis; menaquinol from 1,4-dihydroxy-2-naphthoate: step 2/2. It participates in cofactor biosynthesis; ubiquinone biosynthesis. Its function is as follows. Methyltransferase required for the conversion of demethylmenaquinol (DMKH2) to menaquinol (MKH2) and the conversion of 2-polyprenyl-6-methoxy-1,4-benzoquinol (DDMQH2) to 2-polyprenyl-3-methyl-6-methoxy-1,4-benzoquinol (DMQH2). This is Ubiquinone/menaquinone biosynthesis C-methyltransferase UbiE from Haemophilus ducreyi (strain 35000HP / ATCC 700724).